Consider the following 327-residue polypeptide: GTPase Obg (327 aa).

Residues 1 to 159 (MKFVDSARIV…LKVDLELKLM (159 aa)) enclose the Obg domain. The interval 120–145 (GGDGGRGNPHFTTSTRQAPRYAEPGG) is disordered. The OBG-type G domain occupies 160 to 323 (ADVGLVGFPN…LRNALWNTIN (164 aa)). GTP is bound by residues 166–173 (GFPNAGKS), 191–195 (FTTLV), 213–216 (DIPG), 280–283 (TKMD), and 304–306 (SSI). The Mg(2+) site is built by serine 173 and threonine 193.

The protein belongs to the TRAFAC class OBG-HflX-like GTPase superfamily. OBG GTPase family. As to quaternary structure, monomer. Mg(2+) serves as cofactor.

The protein resides in the cytoplasm. An essential GTPase which binds GTP, GDP and possibly (p)ppGpp with moderate affinity, with high nucleotide exchange rates and a fairly low GTP hydrolysis rate. Plays a role in control of the cell cycle, stress response, ribosome biogenesis and in those bacteria that undergo differentiation, in morphogenesis control. This chain is GTPase Obg, found in Prosthecochloris aestuarii (strain DSM 271 / SK 413).